The primary structure comprises 454 residues: Lipase member H (454 aa).

Residues 1-23 form the signal peptide; sequence MIYRKIIWGILYVTLMLFDTHRA. N-linked (GlcNAc...) asparagine glycans are attached at residues Asn73, Asn137, and Asn151. Ser161 serves as the catalytic Nucleophile. Asp185 serves as the catalytic Charge relay system. An intrachain disulfide couples Cys240 to Cys253. His255 (charge relay system) is an active-site residue. The N-linked (GlcNAc...) asparagine glycan is linked to Asn267. Disulfide bonds link Cys277–Cys288 and Cys291–Cys299. A glycan (N-linked (GlcNAc...) asparagine) is linked at Asn358. The cysteines at positions 430 and 449 are disulfide-linked.

Belongs to the AB hydrolase superfamily. Lipase family.

The protein localises to the secreted. Its subcellular location is the cell membrane. The catalysed reaction is 1-hexadecanoyl-2-(9Z-octadecenoyl)-sn-glycero-3-phosphate + H2O = 2-(9Z-octadecenoyl)-sn-glycero-3-phosphate + hexadecanoate + H(+). Its function is as follows. Hydrolyzes specifically phosphatidic acid (PA) to produce 2-acyl lysophosphatidic acid (LPA; a potent bioactive lipid mediator) and fatty acid. Does not hydrolyze other phospholipids, like phosphatidylserine (PS), phosphatidylcholine (PC) and phosphatidylethanolamine (PE) or triacylglycerol (TG). In Danio rerio (Zebrafish), this protein is Lipase member H (liph).